A 152-amino-acid polypeptide reads, in one-letter code: UPF0756 membrane protein Helmi_09930 (152 aa).

The next 5 membrane-spanning stretches (helical) occupy residues 6-26 (VLLI…TALA), 52-72 (TGLI…KVGL), 75-95 (VLLS…VLAT), 111-131 (IIVG…GIPV), and 132-152 (GPLM…WLSK).

The protein belongs to the UPF0756 family.

The protein localises to the cell membrane. The protein is UPF0756 membrane protein Helmi_09930 of Heliobacterium modesticaldum (strain ATCC 51547 / Ice1).